Reading from the N-terminus, the 306-residue chain is MANITAALVKELREKTGAGMMDCKGALNETNGDLEAAVDWLRKKGLAKAAKKAGRVAAEGLVAVESAGHHAAIVEVNSETDFVARNDGFQAFAREAAKLALNTDGTLEGLQAATFPGSSETVQEKLSNLIATIGENMTLRRVAKLEVSKGVIASYVHGQISEGLGKIGVLVALESEGDVEVLSTLGRQIAMHIAATSPVALDASGVDPAVVERESNILREKNAGKPDHVMAKIVESGLKSYYKEVTLLEQPFVHDGSKTITQVLKEAAGKAGAEVAIKGFIRYALGEGIEKEEGPDFAAEVASMSR.

An involved in Mg(2+) ion dislocation from EF-Tu region spans residues Thr80–Val83.

The protein belongs to the EF-Ts family.

The protein resides in the cytoplasm. In terms of biological role, associates with the EF-Tu.GDP complex and induces the exchange of GDP to GTP. It remains bound to the aminoacyl-tRNA.EF-Tu.GTP complex up to the GTP hydrolysis stage on the ribosome. This Methylorubrum populi (strain ATCC BAA-705 / NCIMB 13946 / BJ001) (Methylobacterium populi) protein is Elongation factor Ts.